A 521-amino-acid polypeptide reads, in one-letter code: Caspase-10 (521 aa).

Residues M1–D219 constitute a propeptide that is removed on maturation. DED domains follow at residues S19–C97 and L114–K187. Polar residues-rich tracts occupy residues S231–A248 and A259–T268. The interval S231–S269 is disordered. Active-site residues include H358 and C401.

The protein belongs to the peptidase C14A family. In terms of assembly, heterotetramer that consists of two anti-parallel arranged heterodimers, each one formed by a 23/17 kDa (p23/17) (depending on the splicing events) and a 12 kDa (p12) subunit. Self-associates. Interacts with FADD and CASP8. Found in a Fas signaling complex consisting of FAS, FADD, CASP8 and CASP10. Interacts with RFFL and RNF34; negatively regulate CASP10 through proteasomal degradation. Interacts with RIOK3. Cleavage by granzyme B and autocatalytic activity generate the two active subunits. As to expression, detectable in most tissues. Lowest expression is seen in brain, kidney, prostate, testis and colon.

The catalysed reaction is Strict requirement for Asp at position P1 and has a preferred cleavage sequence of Leu-Gln-Thr-Asp-|-Gly.. Its function is as follows. Involved in the activation cascade of caspases responsible for apoptosis execution. Recruited to both Fas- and TNFR-1 receptors in a FADD dependent manner. May participate in the granzyme B apoptotic pathways. Cleaves and activates effector caspases CASP3, CASP4, CASP6, CASP7, CASP8 and CASP9. Hydrolyzes the small- molecule substrates, Tyr-Val-Ala-Asp-|-AMC and Asp-Glu-Val-Asp-|-AMC. In terms of biological role, isoform 7 can enhance NF-kappaB activity but promotes only slight apoptosis. Isoform C is proteolytically inactive. The chain is Caspase-10 (CASP10) from Homo sapiens (Human).